Reading from the N-terminus, the 448-residue chain is Glutamyl-tRNA reductase (448 aa).

Substrate-binding positions include T49–R52, S109, E114–Q116, and Q120. The Nucleophile role is filled by C50. G189–G194 is an NADP(+) binding site.

The protein belongs to the glutamyl-tRNA reductase family. As to quaternary structure, homodimer.

It catalyses the reaction (S)-4-amino-5-oxopentanoate + tRNA(Glu) + NADP(+) = L-glutamyl-tRNA(Glu) + NADPH + H(+). It participates in porphyrin-containing compound metabolism; protoporphyrin-IX biosynthesis; 5-aminolevulinate from L-glutamyl-tRNA(Glu): step 1/2. Catalyzes the NADPH-dependent reduction of glutamyl-tRNA(Glu) to glutamate 1-semialdehyde (GSA). This chain is Glutamyl-tRNA reductase, found in Staphylococcus epidermidis (strain ATCC 12228 / FDA PCI 1200).